The primary structure comprises 751 residues: Nibrin (751 aa).

The FHA domain maps to 24 to 83 (YVVGRKNCGILIENDQSISRNHAVLTVNFPVTSLSQTDEIPTLTIKDNSKYGTFVNEEKM). BRCT domains lie at 105–181 (KFRV…SEFL) and 224–315 (GKTF…LAVI). The mediates interaction with SP100 stretch occupies residues 111 to 328 (EPLVVCSSCL…TENYCNPQGQ (218 aa)). The interaction with MTOR, MAPKAP1 and RICTOR stretch occupies residues 221–403 (IFKGKTFVFL…SRKLSQETFN (183 aa)). Thr-337 is modified (phosphothreonine). Ser-343 is modified (phosphoserine; by ATM). Ser-347 and Ser-398 each carry phosphoserine. Residues 389–418 (GLEQSSRKLSQETFNIKEAPKPSSKANNVA) form a disordered region. Phosphoserine; by CDK2 is present on Ser-433. Lys-436 is covalently cross-linked (Glycyl lysine isopeptide (Lys-Gly) (interchain with G-Cter in ubiquitin)). 2 disordered regions span residues 444 to 479 (KDWT…SSCK) and 491 to 550 (EQTQ…RKRK). Residues 446–457 (WTSQQQQNSIKN) show a composition bias toward polar residues. Positions 461–467 (PCTRKRE) match the Nuclear localization signal motif. Basic and acidic residues-rich tracts occupy residues 502-518 (KSKE…READ) and 528-539 (ELNRKSPDRKPL). Ser-508 is subject to Phosphoserine. Residues Lys-569 and Lys-580 each participate in a glycyl lysine isopeptide (Lys-Gly) (interchain with G-Cter in SUMO2) cross-link. Residues 576–645 (VKVEKQEADD…ANSDGLQDSS (70 aa)) form a disordered region. Basic and acidic residues-rich tracts occupy residues 577–599 (KVEK…ERNR) and 615–636 (EDER…HEIA). Residues Lys-684, Lys-688, and Lys-733 each participate in a glycyl lysine isopeptide (Lys-Gly) (interchain with G-Cter in ubiquitin) cross-link. The segment covering 731-742 (QAKEESLADDLF) has biased composition (basic and acidic residues). The interval 731–751 (QAKEESLADDLFRYNPNVKRR) is disordered. The FxF/Y motif motif lies at 738–747 (ADDLFRYNPN).

The protein belongs to the Nibrin family. As to quaternary structure, component of the MRN complex composed of two heterodimers RAD50 and MRE11 associated with a single NBN. The MRN complexes dimerize on DNA to form joined MRN-MRN oligomers required for DNA double-strand break repair. As part of the MRN complex, interacts with MCM9; the interaction recruits the complex to DNA repair sites. Component of the BASC complex, at least composed of BRCA1, MSH2, MSH6, MLH1, ATM, BLM, RAD50, MRE11 and NBN. Interacts with histone H2AX; this requires phosphorylation of H2AX on 'Ser-139' and promotes NBN recruitment to DNA damage sites. Interacts with (phosphorylated) MDC1; promoting NBN recruitment to DNA damage sites. Interacts with (phosphorylated) RAD17; promoting NBN recruitment to DNA damage sites. Interacts (via FxF/Y motif) with ATM. Interacts with HJURP. Interacts with INTS3. Interacts with KPNA2. Interacts with TERF2; interaction is disrupted upon NBN phosphorylation by CDK2. Interacts with (phosphorylated) RBBP8/CtIP; the interaction links the role of the MRN complex in DNA double-strand break sensing to resection. Interacts with SP100; recruits NBN to PML bodies. Interacts with ATF2. Interacts with MTOR, MAPKAP1 isoform 2 and RICTOR; indicative for an association with the mTORC2 complex. Interacts with MRNIP. Interacts with UFL1; promoting UFL1 recruitment to double-strand breaks following DNA damage. Interacts with CYREN (via XLF motif). In terms of processing, ubiquitinated at Lys-436 via 'Lys-6'-linked ubiquitin chains by RNF8, promoting NBN recruitment to DNA double-strand breaks (DSBs). Ubiquitinated at Lys-684 and Lys-688 via 'Lys-63'-linked ubiquitin chains by PELI1: ubiquitination takes place following PELI1 phosphorylation and promotes ATM activation and DNA repair. Ubiquitinated at Lys-733 via 'Lys-63'-linked ubiquitin chains by the SCF(SKP2) complex: ubiquitination takes place following SKP2 phosphorylation and promotes ATM activation and DNA repair. Post-translationally, phosphorylated by ATM in response of ionizing radiation, and such phosphorylation is responsible intra-S phase checkpoint control and telomere maintenance. Phosphorylated at Ser-433 by CDK2 in S/G2 phases abolishes interaction with TERF2, enabling DCLRE1B/Apollo recruitment to telomeres. Phosphorylation at Ser-433 in response to dysfunctional telomeres promotes non-homologous end joining repair at telomeres, while dephosphorylation by PPP1CA promotes microhomology-mediated end-joining (MMEJ) repair. As to expression, high expression in the liver, heart and testis. Low expression in all other tissues analyzed. In the cerebellum the postmitotic Purkinje cells are marked specifically.

Its subcellular location is the nucleus. The protein localises to the chromosome. It is found in the PML body. The protein resides in the telomere. Functionally, component of the MRN complex, which plays a central role in double-strand break (DSB) repair, DNA recombination, maintenance of telomere integrity and meiosis. The MRN complex is involved in the repair of DNA double-strand breaks (DSBs) via homologous recombination (HR), an error-free mechanism which primarily occurs during S and G2 phases. The complex (1) mediates the end resection of damaged DNA, which generates proper single-stranded DNA, a key initial steps in HR, and is (2) required for the recruitment of other repair factors and efficient activation of ATM and ATR upon DNA damage. The MRN complex possesses single-strand endonuclease activity and double-strand-specific 3'-5' exonuclease activity, which are provided by MRE11, to initiate end resection, which is required for single-strand invasion and recombination. Within the MRN complex, NBN acts as a protein-protein adapter, which specifically recognizes and binds phosphorylated proteins, promoting their recruitment to DNA damage sites. Recruits MRE11 and RAD50 components of the MRN complex to DSBs in response to DNA damage. Promotes the recruitment of PI3/PI4-kinase family members ATM, ATR, and probably DNA-PKcs to the DNA damage sites, activating their functions. Mediates the recruitment of phosphorylated RBBP8/CtIP to DSBs, leading to cooperation between the MRN complex and RBBP8/CtIP to initiate end resection. RBBP8/CtIP specifically promotes the endonuclease activity of the MRN complex to clear DNA ends containing protein adducts. The MRN complex is also required for the processing of R-loops. NBN also functions in telomere length maintenance via its interaction with TERF2: interaction with TERF2 during G1 phase preventing recruitment of DCLRE1B/Apollo to telomeres. NBN also promotes DNA repair choice at dysfunctional telomeres: NBN phosphorylation by CDK2 promotes non-homologous end joining repair at telomeres, while unphosphorylated NBN promotes microhomology-mediated end-joining (MMEJ) repair. Enhances AKT1 phosphorylation possibly by association with the mTORC2 complex. The sequence is that of Nibrin from Mus musculus (Mouse).